An 877-amino-acid polypeptide reads, in one-letter code: Hopanoid transporter HpnN (877 aa).

The Cytoplasmic segment spans residues 1-16 (MVTSLIVRLVAWSVRR). Residues 17-37 (PVWVVVLSLLIAAFSGVYVAR) form a helical membrane-spanning segment. The Periplasmic segment spans residues 38–279 (HFKINTDISK…FSSVEDGAAL (242 aa)). A helical membrane pass occupies residues 280–295 (NGVVTLLVVFVILWLA). At 296-299 (LRSK) the chain is on the cytoplasmic side. The chain crosses the membrane as a helical span at residues 300 to 323 (RMIASVLVTLFVGLVVTAALGLAM). The SSD domain maps to 302–428 (IASVLVTLFV…LTLLPALLRL (127 aa)). The Periplasmic portion of the chain corresponds to 324–332 (VGSLNMISV). Residues 333–351 (AFMVLFVGLGVDFSIQYGV) form a helical membrane-spanning segment. Residues 352–373 (KYREERFRDERIDHALIGAAHS) are Cytoplasmic-facing. The helical transmembrane segment at 374–394 (MGMPLALATTAVAASFFSFIP) threads the bilayer. Residues 395 to 399 (TAYRG) lie on the Periplasmic side of the membrane. The helical transmembrane segment at 400–426 (VSELGLIAGVGMFVALLTTLTLLPALL) threads the bilayer. Residues 427 to 452 (RLFAPPGESKTPGFPWLAPVDDYLDR) lie on the Cytoplasmic side of the membrane. Residues 453–472 (HRKPILIGTLAVVIGALPLL) traverse the membrane as a helical segment. At 473 to 718 (AFLHFDFNPL…ILHSANTIIS (246 aa)) the chain is on the periplasmic side. A helical transmembrane segment spans residues 719–739 (AFLHAALWSIISITILLWITL). The Cytoplasmic segment spans residues 740–743 (RRFG). Residues 744 to 766 (DVLRTLVPLLVSGIVTLEMCVVL) form a helical membrane-spanning segment. Topologically, residues 767–774 (GMSLNFAN) are periplasmic. Residues 775–794 (IIALPLMLGVGVAFKVYFVM) form a helical membrane-spanning segment. Residues 795-809 (AWRAGQTGLLHSSLT) are Cytoplasmic-facing. Residues 810–827 (HAVLFSAATTATAFGSLW) form a helical membrane-spanning segment. The Periplasmic segment spans residues 828 to 836 (LSHHPGTSS). Residues 837–858 (MGKLLALALTCTLIGAVVFQPV) traverse the membrane as a helical segment. Residues 859-877 (LMGKPRVKRAKNQSQGINE) lie on the Cytoplasmic side of the membrane.

This sequence belongs to the resistance-nodulation-cell division (RND) (TC 2.A.6) family. MmpL subfamily. Homodimer.

It localises to the cell inner membrane. Its function is as follows. Essential for hopanoid transport from the cytoplasmic to the outer membrane. Is capable of shuttling hopanoid lipids from the inner membrane to the periplasm, where they probably spontaneously insert to the inner leaflet of the outer membrane, strengthening the cell envelope. May be a proton-motive-force (PMF)-dependent transporter. Is critical for multidrug resistance and cell wall remodeling in Burkholderia. This is Hopanoid transporter HpnN from Burkholderia multivorans (strain ATCC 17616 / 249).